The primary structure comprises 954 residues: Patched domain-containing protein 3 (954 aa).

Residues 1-20 are compositionally biased toward basic and acidic residues; sequence MPWVEPKPRPGPEQKPKLTK. Positions 1 to 103 are disordered; sequence MPWVEPKPRP…APLPEEETPE (103 aa). Positions 42–57 are enriched in pro residues; sequence QPPPGPLAPPKSPEPS. Acidic residues predominate over residues 90-102; it reads ELDDAPLPEEETP. The chain crosses the membrane as a helical span at residues 139-159; the sequence is WIFLLAPLMLTAALGTGFLYL. N192, N275, and N279 each carry an N-linked (GlcNAc...) asparagine glycan. 7 consecutive transmembrane segments (helical) span residues 297-317, 383-403, 423-443, 447-467, 486-506, 520-540, and 603-623; these read LTGF…QLLL, VIPV…TSCF, FLAV…FVII, SPFL…SAWH, AAVS…TGIM, GMTL…FMAL, and YFVV…CFHV. The SSD domain occupies 383–540; the sequence is VIPVFHLAYI…ITCFGAFMAL (158 aa). Residues N678, N692, and N737 are each glycosylated (N-linked (GlcNAc...) asparagine). Helical transmembrane passes span 804–824, 826–846, 858–878, 894–914, and 927–947; these read VLVA…YPLC, LWVT…MAFW, LVIC…AFVS, LLGY…CVLA, and IMFL…PVFL.

Belongs to the patched family. As to expression, expressed in germ cells of the testis (at protein level). Detected in blood lymph, colon, small intestine, ovary, testis, prostate, thymus and spleen with highest levels in testis.

Its subcellular location is the cell projection. The protein resides in the cilium. It is found in the flagellum membrane. It localises to the endoplasmic reticulum membrane. May play a role in sperm development or sperm function. However, does not appear to have an essential role in spermatogenesis or male fertility. The protein is Patched domain-containing protein 3 (PTCHD3) of Homo sapiens (Human).